Reading from the N-terminus, the 216-residue chain is Ribosomal RNA small subunit methyltransferase G (216 aa).

Residues Gly-75, Leu-80, and Arg-141 each coordinate S-adenosyl-L-methionine.

It belongs to the methyltransferase superfamily. RNA methyltransferase RsmG family.

The protein resides in the cytoplasm. It carries out the reaction guanosine(527) in 16S rRNA + S-adenosyl-L-methionine = N(7)-methylguanosine(527) in 16S rRNA + S-adenosyl-L-homocysteine. Specifically methylates the N7 position of guanine in position 527 of 16S rRNA. The sequence is that of Ribosomal RNA small subunit methyltransferase G from Nitrosospira multiformis (strain ATCC 25196 / NCIMB 11849 / C 71).